A 207-amino-acid polypeptide reads, in one-letter code: NADH-quinone oxidoreductase subunit C (207 aa).

This sequence belongs to the complex I 30 kDa subunit family. As to quaternary structure, NDH-1 is composed of 14 different subunits. Subunits NuoB, C, D, E, F, and G constitute the peripheral sector of the complex.

The protein localises to the cell inner membrane. It catalyses the reaction a quinone + NADH + 5 H(+)(in) = a quinol + NAD(+) + 4 H(+)(out). Functionally, NDH-1 shuttles electrons from NADH, via FMN and iron-sulfur (Fe-S) centers, to quinones in the respiratory chain. The immediate electron acceptor for the enzyme in this species is believed to be ubiquinone. Couples the redox reaction to proton translocation (for every two electrons transferred, four hydrogen ions are translocated across the cytoplasmic membrane), and thus conserves the redox energy in a proton gradient. The protein is NADH-quinone oxidoreductase subunit C of Bordetella pertussis (strain Tohama I / ATCC BAA-589 / NCTC 13251).